The following is a 25-amino-acid chain: Fibrinolytic enzyme large subunit (25 aa).

The region spanning 1–25 is the Peptidase S1 domain; it reads VIGGTNASPGEIPWQLSQQRQSGSW. Residues 1-25 are disordered; that stretch reads VIGGTNASPGEIPWQLSQQRQSGSW. Over residues 15 to 25 the composition is skewed to polar residues; sequence QLSQQRQSGSW.

It belongs to the peptidase S1 family. As to quaternary structure, heterodimer of a large and a small subunit held together by hydrophobic interactions.

Its function is as follows. Cleaves the carboxyl side of basic amino acids, small neutral amino acids, and Met residue. It is also a plasminogen activator. The sequence is that of Fibrinolytic enzyme large subunit from Eisenia fetida (Red wiggler worm).